The following is a 256-amino-acid chain: Short chain dehydrogenase adrF (256 aa).

I11, D57, R119, Y151, K155, and V184 together coordinate NADP(+). Y151 (proton acceptor) is an active-site residue. K155 serves as the catalytic Lowers pKa of active site Tyr.

The protein belongs to the short-chain dehydrogenases/reductases (SDR) family.

Its pathway is secondary metabolite biosynthesis; terpenoid biosynthesis. Short chain dehydrogenase; part of the gene cluster that mediates the biosynthesis of andrastins, meroterpenoid compounds that exhibit inhibitory activity against ras farnesyltransferase, suggesting that they could be promising leads for antitumor agents. The first step of the pathway is the synthesis of 3,5-dimethylorsellinic acid (DMOA) by the polyketide synthase adrD via condensation of one acetyl-CoA starter unit with 3 malonyl-CoA units and 2 methylations. DMAO is then converted to farnesyl-DMAO by the prenyltransferase adrG. The methyltransferase adrK catalyzes the methylation of the carboxyl group of farnesyl-DMAO to farnesyl-DMAO methyl ester which is further converted to epoxyfarnesyl-DMAO methyl ester by the FAD-dependent monooxygenase adrH. The terpene cyclase adrI then catalyzes the carbon skeletal rearrangement to generate the andrastin E, the first compound in the pathway having the andrastin scaffold, with the tetracyclic ring system. The post-cyclization tailoring enzymes adrF, adrE, adrJ, and adrA, are involved in the conversion of andrastin E into andrastin A. The short chain dehydrogenase adrF is responsible for the oxidation of the C-3 a hydroxyl group of andrastin E to yield the corresponding ketone, andrastin D. The ketoreductase adrE stereoselectively reduces the carbonyl moiety to reverse the stereochemistry of the C-3 position to yield andrastin F. The acetyltransferase adrJ is the acetyltransferase that attaches the acetyl group to the C-3 hydroxyl group of andrastin F to yield andrastin C. Finally, the cytochrome P450 monooxygenase adrA catalyzes two sequential oxidation reactions of the C-23 methyl group, to generate the corresponding alcohol andrastin B, and aldehyde andrastin A. In Penicillium roqueforti, this protein is Short chain dehydrogenase adrF.